We begin with the raw amino-acid sequence, 292 residues long: Elongation factor Ts (292 aa).

The segment at 82–85 (TDFV) is involved in Mg(2+) ion dislocation from EF-Tu.

The protein belongs to the EF-Ts family.

Its subcellular location is the cytoplasm. Its function is as follows. Associates with the EF-Tu.GDP complex and induces the exchange of GDP to GTP. It remains bound to the aminoacyl-tRNA.EF-Tu.GTP complex up to the GTP hydrolysis stage on the ribosome. The protein is Elongation factor Ts of Legionella pneumophila subsp. pneumophila (strain Philadelphia 1 / ATCC 33152 / DSM 7513).